The chain runs to 556 residues: Urocanate hydratase (556 aa).

NAD(+)-binding positions include 53-54, Q131, 177-179, E197, 243-244, 264-268, 274-275, and Y323; these read GG, GMG, NA, QTSAH, and YL. C411 is a catalytic residue. G493 serves as a coordination point for NAD(+).

It belongs to the urocanase family. Requires NAD(+) as cofactor.

The protein resides in the cytoplasm. It catalyses the reaction 4-imidazolone-5-propanoate = trans-urocanate + H2O. Its pathway is amino-acid degradation; L-histidine degradation into L-glutamate; N-formimidoyl-L-glutamate from L-histidine: step 2/3. Catalyzes the conversion of urocanate to 4-imidazolone-5-propionate. The chain is Urocanate hydratase from Pseudomonas fluorescens (strain SBW25).